The following is a 1286-amino-acid chain: Galactose/N-acetyl-D-galactosamine lectin heavy subunit 2 (1286 aa).

The first 15 residues, 1-15 (MKLLLLNILLLCCLA), serve as a signal peptide directing secretion. Over 16 to 1227 (DKLNEFSADI…NNVGAIAAAT (1212 aa)) the chain is Extracellular. N-linked (GlcNAc...) asparagine glycosylation is found at Asn200, Asn331, Asn384, Asn462, Asn652, Asn883, Asn1197, and Asn1207. A helical membrane pass occupies residues 1228–1248 (TVAVVVVAVVVALIVVSIGLF). At 1249-1286 (KTYQLVSSAMKNAITTTNENAEYVGADNEATNAATYNG) the chain is on the cytoplasmic side.

As to quaternary structure, heterodimer composed of a 170 kDa heavy subunit (hgl) and a 31/35 kDa light subunit (lgl); disulfide-linked. Post-translationally, N-glycosylated.

The protein resides in the cell membrane. Lectin which binds galactose and N-acetyl-D-galactosamine of host glycoproteins and thus mediates adhesion to host cells. Mediates adherence to host colonic mucins, an essential step for pathogenic tissue invasion. This chain is Galactose/N-acetyl-D-galactosamine lectin heavy subunit 2, found in Entamoeba histolytica (strain ATCC 30459 / HM-1:IMSS / ABRM).